The following is a 110-amino-acid chain: Thiosulfate sulfurtransferase GlpE (110 aa).

The 89-residue stretch at 17-105 folds into the Rhodanese domain; it reads KKEGAVVVDI…WRATYPAETA (89 aa). Cys65 serves as the catalytic Cysteine persulfide intermediate.

It belongs to the GlpE family.

It localises to the cytoplasm. The catalysed reaction is thiosulfate + hydrogen cyanide = thiocyanate + sulfite + 2 H(+). The enzyme catalyses thiosulfate + [thioredoxin]-dithiol = [thioredoxin]-disulfide + hydrogen sulfide + sulfite + 2 H(+). Transferase that catalyzes the transfer of sulfur from thiosulfate to thiophilic acceptors such as cyanide or dithiols. May function in a CysM-independent thiosulfate assimilation pathway by catalyzing the conversion of thiosulfate to sulfite, which can then be used for L-cysteine biosynthesis. The chain is Thiosulfate sulfurtransferase GlpE from Pseudomonas putida (strain ATCC 700007 / DSM 6899 / JCM 31910 / BCRC 17059 / LMG 24140 / F1).